We begin with the raw amino-acid sequence, 370 residues long: Cysteine-type anaerobic sulfatase-maturating enzyme (370 aa).

The region spanning 1-227 (MPPLSLLIKP…LKNLFDLWYE (227 aa)) is the Radical SAM core domain. Residues Cys-15 and Cys-19 each contribute to the [4Fe-4S] cluster site. Tyr-21 lines the S-adenosyl-L-methionine pocket. Cys-22 serves as a coordination point for [4Fe-4S] cluster. S-adenosyl-L-methionine contacts are provided by Gly-66, Ser-122, Arg-134, and Leu-195. Residues Cys-255, Cys-261, and Cys-276 each contribute to the [4Fe-4S] cluster site. The active-site Proton acceptor is Asp-277. [4Fe-4S] cluster contacts are provided by Cys-317, Cys-320, Cys-326, Cys-330, and Cys-348.

This sequence belongs to the radical SAM superfamily. Anaerobic sulfatase-maturating enzyme family. Requires [4Fe-4S] cluster as cofactor.

It carries out the reaction L-cysteinyl-[sulfatase] + S-adenosyl-L-methionine + H2O = 3-oxo-L-alanyl-[sulfatase] + hydrogen sulfide + 5'-deoxyadenosine + L-methionine + 2 H(+). The protein operates within protein modification; sulfatase oxidation. Functionally, involved in 'Cys-type' sulfatase maturation under anaerobic conditions. Catalyzes the post-translational modification of cysteine into 3-oxoalanine (also known as C(alpha)-formylglycine (FGly)), by a free radical chemical mechanism initiated via the reductive cleavage of S-adenosyl-L-methionine (SAM). The chain is Cysteine-type anaerobic sulfatase-maturating enzyme from Clostridium perfringens (strain 13 / Type A).